The sequence spans 380 residues: Tubby-like F-box protein 9 (380 aa).

Positions 30-76 (PFSWSELPEELLREILIRVETVDGGDWPSRRNVVACAGVCRSWRILT) constitute an F-box domain. The interval 258–283 (SSRSSPVFRSHSKPLRSNSASCSDSG) is disordered. Polar residues predominate over residues 272 to 283 (LRSNSASCSDSG).

It belongs to the TUB family. In terms of assembly, part of a SCF (SKP1-cullin-F-box) protein ligase complex. Interacts with SKP1A/ASK1 and XERICO. In terms of tissue distribution, ubiquitous.

It participates in protein modification; protein ubiquitination. In terms of biological role, component of SCF(ASK-cullin-F-box) E3 ubiquitin ligase complexes, which may mediate the ubiquitination and subsequent proteasomal degradation of target proteins. Confers sensitivity to ABA during seed germination and early seedling development. This is Tubby-like F-box protein 9 from Arabidopsis thaliana (Mouse-ear cress).